We begin with the raw amino-acid sequence, 319 residues long: 4-hydroxy-3-methylbut-2-enyl diphosphate reductase (319 aa).

Residue Cys18 participates in [4Fe-4S] cluster binding. Residues His47 and His81 each contribute to the (2E)-4-hydroxy-3-methylbut-2-enyl diphosphate site. 2 residues coordinate dimethylallyl diphosphate: His47 and His81. Residues His47 and His81 each contribute to the isopentenyl diphosphate site. Cys103 is a binding site for [4Fe-4S] cluster. His131 is a (2E)-4-hydroxy-3-methylbut-2-enyl diphosphate binding site. His131 is a dimethylallyl diphosphate binding site. His131 is a binding site for isopentenyl diphosphate. Glu133 serves as the catalytic Proton donor. Position 172 (Thr172) interacts with (2E)-4-hydroxy-3-methylbut-2-enyl diphosphate. A [4Fe-4S] cluster-binding site is contributed by Cys202. The (2E)-4-hydroxy-3-methylbut-2-enyl diphosphate site is built by Ser230, Ser231, Asn232, and Ser275. Residues Ser230, Ser231, Asn232, and Ser275 each coordinate dimethylallyl diphosphate. Isopentenyl diphosphate contacts are provided by Ser230, Ser231, Asn232, and Ser275.

It belongs to the IspH family. [4Fe-4S] cluster serves as cofactor.

It carries out the reaction isopentenyl diphosphate + 2 oxidized [2Fe-2S]-[ferredoxin] + H2O = (2E)-4-hydroxy-3-methylbut-2-enyl diphosphate + 2 reduced [2Fe-2S]-[ferredoxin] + 2 H(+). The enzyme catalyses dimethylallyl diphosphate + 2 oxidized [2Fe-2S]-[ferredoxin] + H2O = (2E)-4-hydroxy-3-methylbut-2-enyl diphosphate + 2 reduced [2Fe-2S]-[ferredoxin] + 2 H(+). It participates in isoprenoid biosynthesis; dimethylallyl diphosphate biosynthesis; dimethylallyl diphosphate from (2E)-4-hydroxy-3-methylbutenyl diphosphate: step 1/1. It functions in the pathway isoprenoid biosynthesis; isopentenyl diphosphate biosynthesis via DXP pathway; isopentenyl diphosphate from 1-deoxy-D-xylulose 5-phosphate: step 6/6. Its function is as follows. Catalyzes the conversion of 1-hydroxy-2-methyl-2-(E)-butenyl 4-diphosphate (HMBPP) into a mixture of isopentenyl diphosphate (IPP) and dimethylallyl diphosphate (DMAPP). Acts in the terminal step of the DOXP/MEP pathway for isoprenoid precursor biosynthesis. The sequence is that of 4-hydroxy-3-methylbut-2-enyl diphosphate reductase from Beijerinckia indica subsp. indica (strain ATCC 9039 / DSM 1715 / NCIMB 8712).